Reading from the N-terminus, the 221-residue chain is Vesicle transport v-SNARE 11 (221 aa).

An N-acetylserine modification is found at S2. Over 2–198 (SDVFDGYERQ…MTRRMNKNKW (197 aa)) the chain is Cytoplasmic. A coiled-coil region spans residues 32 to 93 (EQKKQKLSEI…FKTEVKRITS (62 aa)). A helical; Anchor for type IV membrane protein membrane pass occupies residues 199–219 (TIGAIIIALIAAIFIILYFKL). Over 220–221 (TK) the chain is Vesicular.

It belongs to the VTI1 family. In terms of assembly, forms SNARE complexes with the t-SNAREs SYP51 and either SYP21 or SYP22 in the PVC, and with a much lower affinity with SYP61 in the TGN. Does not interact with SYP41, SYP42 or VPS45. Binds to EPSIN1. Interacts with SCYL2B. In terms of tissue distribution, expressed in roots, stems, flowers and leaves.

The protein localises to the golgi apparatus. It localises to the trans-Golgi network membrane. Its subcellular location is the prevacuolar compartment membrane. The protein resides in the vacuole membrane. Functions as a v-SNARE responsible for targeting AtELP-containing vesicles from the trans-Golgi network (TGN) to the prevacuolar compartment (PVC) and mediates liposome fusion. May be also involved in retrograde traffic to the cis-Golgi. Promotes the formation of vacuolar membrane 'bulbs'. Necessary to deliver proteins to the lytic vacuole, but seems not involved in storage proteins transport. Required for amyloplast sedimentation in the endodermis during shoot gravitropism, which are thus acting as statoliths. Expression in the endodermis is essential for the shoot gravitropic response, whereas expression in other tissues may be responsible for the correct stem and leaf shape. The protein is Vesicle transport v-SNARE 11 of Arabidopsis thaliana (Mouse-ear cress).